The sequence spans 92 residues: MGRECEITGKRTMFGNNVPRKGLAKKKGGAGQHIGVKTKRTFKVNLINKKFFIPELGKNVSIKISASTLRSISKVGLNVFLKKNNKKIDDFI.

The protein belongs to the bacterial ribosomal protein bL28 family.

The chain is Large ribosomal subunit protein bL28 from Borrelia duttonii (strain Ly).